The chain runs to 1120 residues: Prophage side tail fiber protein homolog StfR (1120 aa).

3 disordered regions span residues 129-154 (KSAS…SARA), 221-442 (SAST…ATRA), and 960-1021 (SGRA…AGAH). Composition is skewed to low complexity over residues 221-239 (SAST…ARDA), 248-395 (SSET…SASA), and 402-442 (RQAS…ATRA). Residues 985 to 1021 (DLGTKTTSSFDYGTKSTNNTGAHTHSVSGSTNSAGAH) are compositionally biased toward polar residues.

The protein belongs to the tail fiber family.

The polypeptide is Prophage side tail fiber protein homolog StfR (stfR) (Escherichia coli (strain K12)).